Reading from the N-terminus, the 126-residue chain is Glycine cleavage system H protein (126 aa).

One can recognise a Lipoyl-binding domain in the interval 22–104 (TVTIGITEYA…YEKAWMVKVE (83 aa)). Lys-63 carries the N6-lipoyllysine modification.

It belongs to the GcvH family. As to quaternary structure, the glycine cleavage system is composed of four proteins: P, T, L and H. It depends on (R)-lipoate as a cofactor.

Its function is as follows. The glycine cleavage system catalyzes the degradation of glycine. The H protein shuttles the methylamine group of glycine from the P protein to the T protein. Is also involved in protein lipoylation via its role as an octanoyl/lipoyl carrier protein intermediate. The sequence is that of Glycine cleavage system H protein from Staphylococcus haemolyticus (strain JCSC1435).